We begin with the raw amino-acid sequence, 92 residues long: UPF0237 protein MM_0082 (92 aa).

The region spanning 7 to 81 (IITVIGSDRV…KSLGVEVKVQ (75 aa)) is the ACT domain.

This sequence belongs to the UPF0237 family.

The sequence is that of UPF0237 protein MM_0082 from Methanosarcina mazei (strain ATCC BAA-159 / DSM 3647 / Goe1 / Go1 / JCM 11833 / OCM 88) (Methanosarcina frisia).